A 767-amino-acid chain; its full sequence is Transient receptor potential cation channel subfamily V member 6 (767 aa).

The segment at 1–33 is disordered; sequence MGPLQREGRPALGDANVAPGSSPGGVWHQPQPP. Topologically, residues 1–366 are cytoplasmic; the sequence is MGPLQREGRP…SLKWKRYGRP (366 aa). ANK repeat units follow at residues 84–114, 118–147, and 156–185; these read IWES…EVHQ, MGET…ELVF, and EGQT…SVSA. Residues 133-143 form an interaction with calmodulin region; the sequence is EAAMVLMEAAP. A phosphotyrosine; by SRC mark is found at Tyr201 and Tyr202. ANK repeat units lie at residues 202 to 231, 235 to 276, and 278 to 307; these read YGEH…DIRA, LGNT…LVPN, and QGLT…HIQW. A helical membrane pass occupies residues 367-387; sequence YFCVLGAIYVLYIICFTMCCV. Over 388–424 the chain is Extracellular; it reads YRPLKPRITNRTNPRDNTLLQQKLLQEAYVTPKDDLR. Asn397 carries N-linked (GlcNAc...) asparagine glycosylation. A helical membrane pass occupies residues 425–447; the sequence is LVGELVSIVGAVIILLVEIPDIF. At 448 to 462 the chain is on the cytoplasmic side; the sequence is RLGVTRFFGQTILGG. A helical membrane pass occupies residues 463-482; the sequence is PFHVIIVTYAFMVLVTMVMR. Residues 483–488 lie on the Extracellular side of the membrane; the sequence is LTNSDG. The chain crosses the membrane as a helical span at residues 489–508; the sequence is EVVPMSFALVLGWCNVMYFA. Over 509-528 the chain is Cytoplasmic; sequence RGFQMLGPFTIMIQKMIFGD. A helical membrane pass occupies residues 529-551; sequence LMRFCWLMAVVILGFASAFYIIF. Residues 552-564 lie on the Extracellular side of the membrane; it reads QTEDPDELGHFYD. Positions 565–584 form an intramembrane region, pore-forming; it reads YPMALFSTFELFLTIIDGPA. The short motif at 580 to 584 is the Selectivity filter element; that stretch reads IDGPA. Asp581 is a Ca(2+) binding site. Topologically, residues 585–595 are extracellular; it reads NYDVDLPFMYS. The chain crosses the membrane as a helical span at residues 596–616; it reads ITYAAFAIIATLLMLNLLIAM. Residues 617–767 are Cytoplasmic-facing; the sequence is MGDTHWRVAH…EDGEGWEYQI (151 aa). An interaction with S100A10 region spans residues 637–641; it reads VATTV. Residues 689–707 are interaction with calmodulin; that stretch reads AFQQQDDLYSEDLEKDSGE.

This sequence belongs to the transient receptor (TC 1.A.4) family. TrpV subfamily. TRPV6 sub-subfamily. Homotetramer. Probably also forms heterotetramers with TRPV5. Interacts with TRPV5. Interacts with S100A10 and probably with the ANAX2-S100A10 heterotetramer. The interaction with S100A10 is required for the trafficking to the plasma membrane. Interacts with calmodulin. Interacts with BSPRY. Interacts with TCAF1 and TCAF2. In terms of processing, glycosylated. Post-translationally, phosphorylation at Tyr-201 and Tyr-202 by SRC leads to an increased calcium influx through the channel. Probably dephosphorylated at these sites by PTPN1. As to expression, expressed in duodenum, proximal jejunum, cecum, and colon.

It localises to the cell membrane. It catalyses the reaction Ca(2+)(in) = Ca(2+)(out). Functionally, calcium selective cation channel that mediates Ca(2+) uptake in various tissues, including the intestine. Important for normal Ca(2+) ion homeostasis in the body, including bone and skin. The channel is activated by low internal calcium level, probably including intracellular calcium store depletion, and the current exhibits an inward rectification. Inactivation includes both a rapid Ca(2+)-dependent and a slower Ca(2+)-calmodulin-dependent mechanism; the latter may be regulated by phosphorylation. In vitro, is slowly inhibited by Mg(2+) in a voltage-independent manner. Heteromeric assembly with TRPV5 seems to modify channel properties. TRPV5-TRPV6 heteromultimeric concatemers exhibit voltage-dependent gating. In Rattus norvegicus (Rat), this protein is Transient receptor potential cation channel subfamily V member 6 (Trpv6).